Here is a 330-residue protein sequence, read N- to C-terminus: Src kinase-associated phosphoprotein 2-B (330 aa).

The tract at residues 57–84 (DKAEDDDQEENDGFPLPPDAVSLASDRD) is disordered. Positions 59–68 (AEDDDQEEND) are enriched in acidic residues. The PH domain maps to 105 to 208 (EYLKAGYLEK…WINAIMNSRG (104 aa)). Residues 236–261 (ELPEESEKPVTETETQKATPVPVNNT) are disordered. Residues 240 to 250 (ESEKPVTETET) show a composition bias toward basic and acidic residues. Residues 251–261 (QKATPVPVNNT) are compositionally biased toward polar residues. The SH3 domain maps to 268–329 (DYANFYRGLW…PKAYIIEMYD (62 aa)).

This sequence belongs to the SKAP family. Phosphorylated on tyrosines.

The protein resides in the cytoplasm. May be involved in B-cell and macrophage adhesion processes. May play a role in src signaling pathway. This Xenopus laevis (African clawed frog) protein is Src kinase-associated phosphoprotein 2-B (skap2-b).